A 268-amino-acid chain; its full sequence is MICOS complex subunit MIC27 (268 aa).

The N-terminal 27 residues, 1-27 (MAAIRMGKLTTMPAGLIYASVSVHAAK), are a transit peptide targeting the mitochondrion. Residues 28 to 110 (QEESKKQLVK…YVYLKNPPRD (83 aa)) are Mitochondrial intermembrane-facing. A helical membrane pass occupies residues 111–129 (FLPKMGVITVSGLAGLVSA). The Mitochondrial matrix segment spans residues 130–137 (RKGSKFKK). A helical membrane pass occupies residues 138-155 (ITYPLGLATLGATVCYPV). Residues 156–268 (QSVIIAKVTA…EDIDMYSTRS (113 aa)) lie on the Mitochondrial intermembrane side of the membrane. Residues 187 to 200 (SKEESLPKPKEKTK) show a composition bias toward basic and acidic residues. The disordered stretch occupies residues 187–268 (SKEESLPKPK…EDIDMYSTRS (82 aa)). At Ser-204 the chain carries Phosphoserine. The span at 249 to 260 (KLMDHGQSHPED) shows a compositional bias: basic and acidic residues.

The protein belongs to the apolipoprotein O/MICOS complex subunit Mic27 family. As to quaternary structure, component of the mitochondrial contact site and cristae organizing system (MICOS) complex, composed of at least MICOS10/MIC10, CHCHD3/MIC19, CHCHD6/MIC25, APOOL/MIC27, IMMT/MIC60, APOO/MIC23/MIC26 and MICOS13/MIC13. This complex was also known under the names MINOS or MitOS complex. The MICOS complex associates with mitochondrial outer membrane proteins SAMM50, MTX1 and MTX2 (together described as components of the mitochondrial outer membrane sorting assembly machinery (SAM) complex) and DNAJC11, mitochondrial inner membrane protein TMEM11 and with HSPA9. The MICOS and SAM complexes together with DNAJC11 are part of a large protein complex spanning both membranes termed the mitochondrial intermembrane space bridging (MIB) complex. Interacts with MICOS10/MIC10, IMMT/MIC60 and APOO/MIC23/MIC26.

It is found in the mitochondrion inner membrane. The protein localises to the mitochondrion. Functionally, component of the MICOS complex, a large protein complex of the mitochondrial inner membrane that plays crucial roles in the maintenance of crista junctions, inner membrane architecture, and formation of contact sites to the outer membrane. Specifically binds to cardiolipin (in vitro) but not to the precursor lipid phosphatidylglycerol. Plays a crucial role in crista junction formation and mitochondrial function,. The sequence is that of MICOS complex subunit MIC27 (APOOL) from Homo sapiens (Human).